The following is a 3174-amino-acid chain: Probable polyketide synthase 15 (3174 aa).

Residues 23–474 enclose the Ketosynthase family 3 (KS3) domain; sequence NDEIAIVGIG…GSNCCLILSQ (452 aa). Active-site for beta-ketoacyl synthase activity residues include C194, H342, and H397. Coiled-coil stretches lie at residues 472 to 509 and 574 to 604; these read LSQF…QYDN and EFNK…RVQT. Basic and acidic residues predominate over residues 578–599; the sequence is QKQSQKEKEKEKEREGEEKEQL. Residues 578–601 are disordered; it reads QKQSQKEKEKEKEREGEEKEQLNR. The segment at 707–740 is acyl/malonyl transferase; the sequence is GIEASFIVGHSLGEIPAAYCSGMITLDTLCYLIY. The active-site For acyl/malonyl transferase activity is the S717. The segment at 1034–1156 is N-terminal hotdog fold; it reads IDILGLSNYD…ANFQLLNNNN (123 aa). The PKS/mFAS DH domain maps to 1034 to 1332; it reads IDILGLSNYD…CKSLKIVKNP (299 aa). H1068 functions as the Proton acceptor; for dehydratase activity in the catalytic mechanism. Positions 1182–1332 are C-terminal hotdog fold; it reads NKTKISRIDL…CKSLKIVKNP (151 aa). The active-site Proton donor; for dehydratase activity is D1241. Residues 1758–1793 adopt a coiled-coil conformation; the sequence is LEININNNNNNNNNNNNNNNNNNNNNNNNNNYEDNV. The 78-residue stretch at 2653–2730 folds into the Carrier domain; it reads VDSLNIKDIF…LVIKIIITAI (78 aa). Position 2690 is an O-(pantetheine 4'-phosphoryl)serine (S2690).

Pantetheine 4'-phosphate is required as a cofactor.

Probable polyketide synthase. The polypeptide is Probable polyketide synthase 15 (pks15) (Dictyostelium discoideum (Social amoeba)).